The primary structure comprises 1113 residues: Translation initiation factor IF-2 (1113 aa).

Polar residues-rich tracts occupy residues 56–72, 129–139, 162–187, and 194–205; these read QSNQSINNKTKQNSSKE, KANTSNQSKGV, LENNASKQNIEDNNNFQERSPRTQLV, and TKNNEPPQQKTS. 2 disordered regions span residues 56–446 and 470–504; these read QSNQ…IGEN and LARPAKPKSTKKSNSKATVVTRKRKKESTRQRQRR. The span at 248–265 shows a compositional bias: low complexity; the sequence is PVQPRTQNNQNRQRIPNK. Residues 415–429 are compositionally biased toward basic and acidic residues; the sequence is RRSDWDDAAKLEALR. Basic residues-rich tracts occupy residues 474–483 and 490–504; these read AKPKSTKKSN and TRKRKKESTRQRQRR. Positions 605-777 constitute a tr-type G domain; sequence RRPPVVTVMG…VLLVTEVEDL (173 aa). The tract at residues 614-621 is G1; that stretch reads GHVDHGKT. 614 to 621 is a binding site for GTP; sequence GHVDHGKT. The interval 639 to 643 is G2; it reads GITQH. The tract at residues 664–667 is G3; it reads DTPG. Residues 664–668 and 718–721 each bind GTP; these read DTPGH and NKID. Residues 718–721 are G4; the sequence is NKID. The G5 stretch occupies residues 754 to 756; the sequence is SAI.

The protein belongs to the TRAFAC class translation factor GTPase superfamily. Classic translation factor GTPase family. IF-2 subfamily.

It is found in the cytoplasm. Its function is as follows. One of the essential components for the initiation of protein synthesis. Protects formylmethionyl-tRNA from spontaneous hydrolysis and promotes its binding to the 30S ribosomal subunits. Also involved in the hydrolysis of GTP during the formation of the 70S ribosomal complex. This chain is Translation initiation factor IF-2, found in Prochlorococcus marinus (strain MIT 9211).